Here is a 421-residue protein sequence, read N- to C-terminus: Alpha-tubulin N-acetyltransferase 1 (421 aa).

Residues 1-190 (MEFPFDVDAL…NNFVIFEGFF (190 aa)) enclose the N-acetyltransferase domain. At lysine 56 the chain carries N6-acetyllysine; by autocatalysis. 124-137 (FYIHESVQRHGHGR) contacts acetyl-CoA. Lysine 146 is subject to N6-acetyllysine; by autocatalysis. 160–169 (SQKLLKFLNK) contributes to the acetyl-CoA binding site. The tract at residues 196 to 235 (PPAPSLRATRHSRAAAVDPTPAAPARKLPPKRAEGDIKPY) is disordered. Low complexity predominate over residues 209-221 (AAAVDPTPAAPAR). Residues 226 to 235 (KRAEGDIKPY) are compositionally biased toward basic and acidic residues. Lysine 233 and lysine 244 each carry N6-acetyllysine; by autocatalysis. Residues 252–284 (PLNRAPRRATPPAHPPPRSSSLGNSPERGPLRP) form a disordered region. Phosphoserine is present on residues serine 272 and serine 276. Arginine 305 carries the post-translational modification Asymmetric dimethylarginine. Residues 306–402 (LLLAADPGGS…PAQSWTVGGD (97 aa)) form a disordered region. Serine 315 carries the post-translational modification Phosphoserine. Arginine 323 is subject to Omega-N-methylarginine. The span at 342–354 (VNSSSPNTGNQDS) shows a compositional bias: polar residues. Over residues 355 to 367 (KQGEQETKNRSAS) the composition is skewed to basic and acidic residues.

The protein belongs to the acetyltransferase ATAT1 family. In terms of assembly, component of the BBSome complex. Interacts with AP2 alpha-adaptins, including AP2A2, but not with AP1 gamma-adaptin (AP1G1/AP1G2); this interaction is required for efficient alpha-tubulin acetylation, hence clathrin-coated pits are sites of microtubule acetylation. In terms of processing, autoacetylation strongly increases tubulin acetylation.

The protein localises to the cytoplasm. Its subcellular location is the membrane. It localises to the clathrin-coated pit. It is found in the cell junction. The protein resides in the focal adhesion. The protein localises to the cell projection. Its subcellular location is the axon. It localises to the cytoskeleton. It is found in the spindle. It catalyses the reaction L-lysyl-[alpha-tubulin] + acetyl-CoA = N(6)-acetyl-L-lysyl-[alpha-tubulin] + CoA + H(+). Functionally, specifically acetylates 'Lys-40' in alpha-tubulin on the lumenal side of microtubules. Promotes microtubule destabilization and accelerates microtubule dynamics; this activity may be independent of acetylation activity. Acetylates alpha-tubulin with a slow enzymatic rate, due to a catalytic site that is not optimized for acetyl transfer. Enters the microtubule through each end and diffuses quickly throughout the lumen of microtubules. Acetylates only long/old microtubules because of its slow acetylation rate since it does not have time to act on dynamically unstable microtubules before the enzyme is released. Required for normal sperm flagellar function. Promotes directional cell locomotion and chemotaxis, through AP2A2-dependent acetylation of alpha-tubulin at clathrin-coated pits that are concentrated at the leading edge of migrating cells. May facilitate primary cilium assembly. This Homo sapiens (Human) protein is Alpha-tubulin N-acetyltransferase 1.